Here is a 170-residue protein sequence, read N- to C-terminus: uncharacterized protein (170 aa).

Positions 15–81 (EAFDEKAEKE…EREKSKSAVS (67 aa)) form a coiled coil. Residues 20–77 (KAEKEKVEKEKALKEKTEKEKAEKEKAEKEKVEKEKAEKEKAAKEKAAKEKAEREKSK) show a composition bias toward basic and acidic residues. Residues 20-95 (KAEKEKVEKE…NQNSNKGNVE (76 aa)) form a disordered region. Residues 78 to 92 (SAVSPATTNQNSNKG) are compositionally biased toward polar residues. Residues 98-118 (VAIGVLAGGAVTGVAVGGAYL) traverse the membrane as a helical segment.

It localises to the membrane. This is an uncharacterized protein from Dictyostelium discoideum (Social amoeba).